We begin with the raw amino-acid sequence, 747 residues long: Threonine synthase-like 1 (747 aa).

K351 carries the post-translational modification N6-(pyridoxal phosphate)lysine.

The protein belongs to the threonine synthase family. The cofactor is pyridoxal 5'-phosphate.

The polypeptide is Threonine synthase-like 1 (Thnsl1) (Mus musculus (Mouse)).